The sequence spans 596 residues: Leucine zipper putative tumor suppressor 1 (596 aa).

Glycine 2 is lipidated: N-myristoyl glycine. Disordered stretches follow at residues 136–193 (AILH…SYQL) and 295–324 (YEER…SQKS). Basic and acidic residues predominate over residues 153-162 (PPDKPKEQEL). Over residues 178–190 (SMSSLPTHSTSSS) the composition is skewed to low complexity. Positions 256–374 (ISTDECSIQE…SYEREKTSFG (119 aa)) form a coiled coil. Residues 295–310 (YEERPRRCRDELEGPE) are compositionally biased toward basic and acidic residues.

The protein belongs to the LZTS family. Binds EEF1G, TLK2 and CDK1. In terms of processing, phosphorylated on serine residues. Hyperphosphorylated by the cAMP-dependent kinase PKA during cell-cycle progression. As to expression, highly expressed in testis, prostate, spleen, thymus, ovary and brain. Detected at lower levels in heart, placenta, small intestine, colon, liver, kidney, skeletal muscle and pancreas. Not detectable in primary tumors from breast and prostate and in many cancer cell lines.

It is found in the cytoplasm. It localises to the cell membrane. Its subcellular location is the cell projection. The protein resides in the dendritic spine. The protein localises to the postsynaptic density. It is found in the synapse. Involved in the regulation of cell growth. May stabilize the active CDC2-cyclin B1 complex and thereby contribute to the regulation of the cell cycle and the prevention of uncontrolled cell proliferation. May act as a tumor suppressor. In Homo sapiens (Human), this protein is Leucine zipper putative tumor suppressor 1 (LZTS1).